The primary structure comprises 353 residues: Photosystem II protein D1 (353 aa).

Threonine 2 is subject to N-acetylthreonine. Threonine 2 bears the Phosphothreonine mark. A run of 3 helical transmembrane segments spans residues tyrosine 29–serine 46, histidine 118–leucine 133, and tryptophan 142–alanine 156. Position 118 (histidine 118) interacts with chlorophyll a. Tyrosine 126 contacts pheophytin a. The [CaMn4O5] cluster site is built by aspartate 170 and glutamate 189. Residues phenylalanine 197 to leucine 218 form a helical membrane-spanning segment. Residue histidine 198 coordinates chlorophyll a. A quinone-binding positions include histidine 215 and serine 264–phenylalanine 265. Residue histidine 215 coordinates Fe cation. Position 272 (histidine 272) interacts with Fe cation. Residues phenylalanine 274–leucine 288 form a helical membrane-spanning segment. Histidine 332, glutamate 333, aspartate 342, and alanine 344 together coordinate [CaMn4O5] cluster. The propeptide occupies alanine 345–glycine 353.

Belongs to the reaction center PufL/M/PsbA/D family. PSII is composed of 1 copy each of membrane proteins PsbA, PsbB, PsbC, PsbD, PsbE, PsbF, PsbH, PsbI, PsbJ, PsbK, PsbL, PsbM, PsbT, PsbX, PsbY, PsbZ, Psb30/Ycf12, at least 3 peripheral proteins of the oxygen-evolving complex and a large number of cofactors. It forms dimeric complexes. It depends on The D1/D2 heterodimer binds P680, chlorophylls that are the primary electron donor of PSII, and subsequent electron acceptors. It shares a non-heme iron and each subunit binds pheophytin, quinone, additional chlorophylls, carotenoids and lipids. D1 provides most of the ligands for the Mn4-Ca-O5 cluster of the oxygen-evolving complex (OEC). There is also a Cl(-1) ion associated with D1 and D2, which is required for oxygen evolution. The PSII complex binds additional chlorophylls, carotenoids and specific lipids. as a cofactor. Post-translationally, tyr-161 forms a radical intermediate that is referred to as redox-active TyrZ, YZ or Y-Z. C-terminally processed by CTPA; processing is essential to allow assembly of the oxygen-evolving complex and thus photosynthetic growth.

The protein resides in the plastid. The protein localises to the chloroplast thylakoid membrane. It carries out the reaction 2 a plastoquinone + 4 hnu + 2 H2O = 2 a plastoquinol + O2. In terms of biological role, photosystem II (PSII) is a light-driven water:plastoquinone oxidoreductase that uses light energy to abstract electrons from H(2)O, generating O(2) and a proton gradient subsequently used for ATP formation. It consists of a core antenna complex that captures photons, and an electron transfer chain that converts photonic excitation into a charge separation. The D1/D2 (PsbA/PsbD) reaction center heterodimer binds P680, the primary electron donor of PSII as well as several subsequent electron acceptors. The sequence is that of Photosystem II protein D1 from Phaseolus vulgaris (Kidney bean).